We begin with the raw amino-acid sequence, 117 residues long: Peptidyl-tRNA hydrolase (117 aa).

The protein belongs to the PTH2 family.

The protein localises to the cytoplasm. The catalysed reaction is an N-acyl-L-alpha-aminoacyl-tRNA + H2O = an N-acyl-L-amino acid + a tRNA + H(+). The natural substrate for this enzyme may be peptidyl-tRNAs which drop off the ribosome during protein synthesis. The chain is Peptidyl-tRNA hydrolase from Metallosphaera sedula (strain ATCC 51363 / DSM 5348 / JCM 9185 / NBRC 15509 / TH2).